Reading from the N-terminus, the 251-residue chain is 3-deoxy-manno-octulosonate cytidylyltransferase (251 aa).

The protein belongs to the KdsB family.

It localises to the cytoplasm. It catalyses the reaction 3-deoxy-alpha-D-manno-oct-2-ulosonate + CTP = CMP-3-deoxy-beta-D-manno-octulosonate + diphosphate. Its pathway is nucleotide-sugar biosynthesis; CMP-3-deoxy-D-manno-octulosonate biosynthesis; CMP-3-deoxy-D-manno-octulosonate from 3-deoxy-D-manno-octulosonate and CTP: step 1/1. It functions in the pathway bacterial outer membrane biogenesis; lipopolysaccharide biosynthesis. Activates KDO (a required 8-carbon sugar) for incorporation into bacterial lipopolysaccharide in Gram-negative bacteria. In Sodalis glossinidius (strain morsitans), this protein is 3-deoxy-manno-octulosonate cytidylyltransferase.